The following is a 371-amino-acid chain: uncharacterized protein (371 aa).

Positions 287-323 (EVVTALDRYRQHLRETRERLEEKQGKLLEELKGYESM) form a coiled coil.

This is an uncharacterized protein from Aspergillus fumigatus (strain ATCC MYA-4609 / CBS 101355 / FGSC A1100 / Af293) (Neosartorya fumigata).